Consider the following 470-residue polypeptide: MSTPTLTLSEDRLLPRESSALAAAREIYRSTKGLPIISPHGHVPVSWIADDMAFSDPTSLLITPDHYVNRLLHANGVDLEDLGVGRKTMSEEDNRRAFRILCEHWRDFAGTAMRYWLVDQLIGIFGITERPSPENADRIYDTIAERIAQPDFLPRALMDSFDIAFIATTDDPCDDLDGHARLAADETFTRRVAPTFRPDKYLEPAAGGWTGLLARLSEVSGCDATTLDGFTEAMEDRRAYFRQHGAVSSDHSHRDLGTIILDHDRAASIFDASVAGRATVEEMALLRRHLFTDQARMASEDGLTMTVHPAVHRNHDTAAFHRFGADIGSDVPVTLEVVDSLHPLLDKFGNTDLKLVVFTIDETLYSREIAPLSGWYRSLYIGVPWWFIDAPESVMRFKHAVTEMAGFSRVSGMIDDTRAFCSIPARHDMSRRLDAAHLAELVVLGRLDLDEAVEIAHRLVVEQPTQVFGL.

It belongs to the metallo-dependent hydrolases superfamily. Uronate isomerase family.

It catalyses the reaction D-glucuronate = D-fructuronate. The enzyme catalyses aldehydo-D-galacturonate = keto-D-tagaturonate. It participates in carbohydrate metabolism; pentose and glucuronate interconversion. The polypeptide is Uronate isomerase (Cutibacterium acnes (strain DSM 16379 / KPA171202) (Propionibacterium acnes)).